The chain runs to 258 residues: Phosphate import ATP-binding protein PstB (258 aa).

The 243-residue stretch at 5-247 (IDISGLSAFY…ERIFSNPSVQ (243 aa)) folds into the ABC transporter domain. An ATP-binding site is contributed by 37–44 (GPSGCGKS).

The protein belongs to the ABC transporter superfamily. Phosphate importer (TC 3.A.1.7) family. As to quaternary structure, the complex is composed of two ATP-binding proteins (PstB), two transmembrane proteins (PstC and PstA) and a solute-binding protein (PstS).

The protein resides in the cell membrane. It carries out the reaction phosphate(out) + ATP + H2O = ADP + 2 phosphate(in) + H(+). Its function is as follows. Part of the ABC transporter complex PstSACB involved in phosphate import. Responsible for energy coupling to the transport system. In Streptomyces griseus, this protein is Phosphate import ATP-binding protein PstB.